The primary structure comprises 96 residues: Methanol dehydrogenase [cytochrome c] subunit 2 (96 aa).

A signal peptide spans 1-22 (MKTTLIAAAIVALSGLAAPALA). C28 and C34 are oxidised to a cystine. The tract at residues 45-75 (IAGSKYDPKHDPKELNKQADSIKQMEERNKK) is disordered. Residues 50 to 61 (YDPKHDPKELNK) are compositionally biased toward basic and acidic residues.

Belongs to the methanol dehydrogenase subunit 2 family. As to quaternary structure, heterotetramer composed of 2 alpha and 2 beta subunits.

The protein localises to the periplasm. The catalysed reaction is 2 Fe(III)-[cytochrome cL] + a primary alcohol = 2 Fe(II)-[cytochrome cL] + an aldehyde + 2 H(+). Catalyzes the oxidation of primary alcohols including methanol. The polypeptide is Methanol dehydrogenase [cytochrome c] subunit 2 (moxI) (Methylorubrum extorquens (strain ATCC 14718 / DSM 1338 / JCM 2805 / NCIMB 9133 / AM1) (Methylobacterium extorquens)).